The following is a 256-amino-acid chain: Pimeloyl-[acyl-carrier protein] methyl ester esterase (256 aa).

One can recognise an AB hydrolase-1 domain in the interval 15-242; that stretch reads HLVLLHGWGL…AAHAPFISHP (228 aa). Residues Trp-22, 82–83, and 143–147 each bind substrate; these read SL and FLALQ. Ser-82 acts as the Nucleophile in catalysis. Catalysis depends on residues Asp-207 and His-235. His-235 serves as a coordination point for substrate.

This sequence belongs to the AB hydrolase superfamily. Carboxylesterase BioH family. Monomer.

The protein localises to the cytoplasm. The enzyme catalyses 6-carboxyhexanoyl-[ACP] methyl ester + H2O = 6-carboxyhexanoyl-[ACP] + methanol + H(+). Its pathway is cofactor biosynthesis; biotin biosynthesis. The physiological role of BioH is to remove the methyl group introduced by BioC when the pimeloyl moiety is complete. It allows to synthesize pimeloyl-ACP via the fatty acid synthetic pathway through the hydrolysis of the ester bonds of pimeloyl-ACP esters. This Escherichia coli O6:H1 (strain CFT073 / ATCC 700928 / UPEC) protein is Pimeloyl-[acyl-carrier protein] methyl ester esterase.